The primary structure comprises 660 residues: MSLVDSDSDEEEDATSAQPYVNLMKRLIETNPQKAKRRKLDHAPAEDNQPEAAPAPESGDEDERDDEQEEQRDVDEVEEAEEDTADIQPEDLFDEDDDLDETDPFETHISNPDENTVPPRVRAAQNGKWKMQRQPFESTRAYWSYPQTEDGQELPLPAPITSVSNLHLKKRLKEVMEFKRSTFGVVEKTVAPFLFNYRDMLYCDRTVGSSQDLRNLAALHALNHLYKTRDRVIKNNARLAKADANEDLELRDQGFTRPKVLMLLPTRQSCVKMVDSILSVCQPDQQENRKRFEDGYIEKLSKFSDDKPEDFRDLFSGNDDDMFRLGMKFTRKSVKYFSQFYNSDIIFASPLGLRMAIGSEEERKVDFDFLSSIELVIVDQADALLMQNWEHVEFIFEHLNIQPKDAHGCDFSRVRSWYLDDQAKYFRQTVVFSAFNTPELAELMRAHCHNWAGKVRLQQECPGTIQYLPVKARQTFSRFDAPTVAADPDARFNYFTKAIVPLLTKRNAKDANSTLIFIPSYLDFVRVRNFFANNPIVEAVTFGTISEYADIPEASRARSHFLTGRHKVLLYTERAHHFRRYQIKGVKRVIMYSLPDNPLFYREIAGGYLQKSEQSLMVEHGQGVVRVMFSKYDLMKLERIVGTSRVGKMIKEQGDTFDFV.

2 stretches are compositionally biased toward acidic residues: residues 1 to 14 (MSLVDSDSDEEEDA) and 58 to 104 (SGDE…ETDP). Residues 1-133 (MSLVDSDSDE…AQNGKWKMQR (133 aa)) are disordered.

Belongs to the UTP25 family. As to quaternary structure, component of the ribosomal small subunit (SSU) processome composed of at least 40 protein subunits and snoRNA U3.

It localises to the nucleus. The protein resides in the nucleolus. Its function is as follows. DEAD-box RNA helicase-like protein required for pre-18S rRNA processing, specifically at sites A0, A1, and A2. This Podospora anserina (strain S / ATCC MYA-4624 / DSM 980 / FGSC 10383) (Pleurage anserina) protein is U3 small nucleolar RNA-associated protein 25 (UTP25).